Here is a 104-residue protein sequence, read N- to C-terminus: Large ribosomal subunit protein bL21 (104 aa).

It belongs to the bacterial ribosomal protein bL21 family. As to quaternary structure, part of the 50S ribosomal subunit. Contacts protein L20.

Its function is as follows. This protein binds to 23S rRNA in the presence of protein L20. The chain is Large ribosomal subunit protein bL21 from Streptococcus agalactiae serotype Ia (strain ATCC 27591 / A909 / CDC SS700).